We begin with the raw amino-acid sequence, 380 residues long: MANIRKTHPLLKIINGAVIDLPTPSNISAWWNFGSLLGLCLITQVLTGLFLAMHYTADITLAFSSVAHICRDVNYGWLLRNIHANGASFFFICIYLHIARGLYYGSYLYKETWNIGVLLLLLVMMTAFVGYVLPWGQMSFWGATVITNLLSAFPYIGDTLVQWIWGGFSVDNATLTRFFTFHFLLPFIIMGATMLHLLFLHETGSNNPTGLNSDADKVTFHPYFSYKDLLGFTILLAILSALALLNPNLLGDPENFTPANPLVTPPHIKPEWYFLFAYAILRSIPNKLGGVLALLLSILILVVVPVLHTSKQRSNTFRPPSQTLFWILVANMLVLTWIGGQPVEHPFIIIGQIASVLYFMLFLILIPLTGWLENKILDWA.

The next 4 helical transmembrane spans lie at 33-53, 77-98, 113-133, and 178-198; these read FGSLLGLCLITQVLTGLFLAM, WLLRNIHANGASFFFICIYLHI, WNIGVLLLLLVMMTAFVGYVL, and FFTFHFLLPFIIMGATMLHLL. Positions 83 and 97 each coordinate heme b. Positions 182 and 196 each coordinate heme b. Histidine 201 contributes to the a ubiquinone binding site. Helical transmembrane passes span 226-246, 288-308, 320-340, and 347-367; these read YKDLLGFTILLAILSALALLN, LGGVLALLLSILILVVVPVLH, PSQTLFWILVANMLVLTWIGG, and FIIIGQIASVLYFMLFLILIP.

The protein belongs to the cytochrome b family. The cytochrome bc1 complex contains 3 respiratory subunits (MT-CYB, CYC1 and UQCRFS1), 2 core proteins (UQCRC1 and UQCRC2) and probably 6 low-molecular weight proteins. Heme b serves as cofactor.

It is found in the mitochondrion inner membrane. Functionally, component of the ubiquinol-cytochrome c reductase complex (complex III or cytochrome b-c1 complex) that is part of the mitochondrial respiratory chain. The b-c1 complex mediates electron transfer from ubiquinol to cytochrome c. Contributes to the generation of a proton gradient across the mitochondrial membrane that is then used for ATP synthesis. This is Cytochrome b (mt-cyb) from Atractosteus spatula (Alligator gar).